We begin with the raw amino-acid sequence, 141 residues long: Head virion protein G6P (141 aa).

3 helical membrane passes run 3–23 (WLSG…DFFA), 33–53 (GLVV…ILLI), and 80–100 (LPGP…LNII).

This sequence belongs to the inovirus G6P protein family. Interacts with G3P; this interaction is required for proper integration of G3P and G6P into the virion.

The protein resides in the virion. The protein localises to the host membrane. Its function is as follows. Plays essential roles both in the entry of the viral genome into the bacterial host and in budding process. The formation of the G3P-G6P complex termed adsorption complex is essential for correct termination of filamentous phage assembly. The chain is Head virion protein G6P (VI) from Pseudomonas phage Pf1 (Bacteriophage Pf1).